The following is a 276-amino-acid chain: Sulfur carrier protein FdhD (276 aa).

Catalysis depends on C120, which acts as the Cysteine persulfide intermediate.

Belongs to the FdhD family.

It localises to the cytoplasm. Required for formate dehydrogenase (FDH) activity. Acts as a sulfur carrier protein that transfers sulfur from IscS to the molybdenum cofactor prior to its insertion into FDH. This Bordetella bronchiseptica (strain ATCC BAA-588 / NCTC 13252 / RB50) (Alcaligenes bronchisepticus) protein is Sulfur carrier protein FdhD.